Consider the following 101-residue polypeptide: NAD(P)H-quinone oxidoreductase subunit 4L, chloroplastic (101 aa).

3 helical membrane passes run 2 to 22 (ILEH…YGLI), 32 to 52 (MCLE…SDFF), and 61 to 81 (IFCI…LAIV).

It belongs to the complex I subunit 4L family. As to quaternary structure, NDH is composed of at least 16 different subunits, 5 of which are encoded in the nucleus.

The protein resides in the plastid. Its subcellular location is the chloroplast thylakoid membrane. It carries out the reaction a plastoquinone + NADH + (n+1) H(+)(in) = a plastoquinol + NAD(+) + n H(+)(out). It catalyses the reaction a plastoquinone + NADPH + (n+1) H(+)(in) = a plastoquinol + NADP(+) + n H(+)(out). Functionally, NDH shuttles electrons from NAD(P)H:plastoquinone, via FMN and iron-sulfur (Fe-S) centers, to quinones in the photosynthetic chain and possibly in a chloroplast respiratory chain. The immediate electron acceptor for the enzyme in this species is believed to be plastoquinone. Couples the redox reaction to proton translocation, and thus conserves the redox energy in a proton gradient. This Olimarabidopsis pumila (Dwarf rocket) protein is NAD(P)H-quinone oxidoreductase subunit 4L, chloroplastic.